Here is a 137-residue protein sequence, read N- to C-terminus: uncharacterized protein (137 aa).

The protein belongs to the DCC thiol-disulfide oxidoreductase family.

This is an uncharacterized protein from Bacillus subtilis (strain 168).